The following is a 126-amino-acid chain: Small ribosomal subunit protein uS12 (126 aa).

Residue aspartate 89 is modified to 3-methylthioaspartic acid.

This sequence belongs to the universal ribosomal protein uS12 family. Part of the 30S ribosomal subunit. Contacts proteins S8 and S17. May interact with IF1 in the 30S initiation complex.

Functionally, with S4 and S5 plays an important role in translational accuracy. Interacts with and stabilizes bases of the 16S rRNA that are involved in tRNA selection in the A site and with the mRNA backbone. Located at the interface of the 30S and 50S subunits, it traverses the body of the 30S subunit contacting proteins on the other side and probably holding the rRNA structure together. The combined cluster of proteins S8, S12 and S17 appears to hold together the shoulder and platform of the 30S subunit. The protein is Small ribosomal subunit protein uS12 of Polynucleobacter asymbioticus (strain DSM 18221 / CIP 109841 / QLW-P1DMWA-1) (Polynucleobacter necessarius subsp. asymbioticus).